The following is a 689-amino-acid chain: Glycine--tRNA ligase beta subunit (689 aa).

This sequence belongs to the class-II aminoacyl-tRNA synthetase family. Tetramer of two alpha and two beta subunits.

Its subcellular location is the cytoplasm. It carries out the reaction tRNA(Gly) + glycine + ATP = glycyl-tRNA(Gly) + AMP + diphosphate. The polypeptide is Glycine--tRNA ligase beta subunit (Shewanella woodyi (strain ATCC 51908 / MS32)).